The following is a 136-amino-acid chain: Galectin-7 (136 aa).

The Galectin domain occupies His6–Phe136. Trp70–Gly76 contributes to the a beta-D-galactoside binding site.

As to quaternary structure, monomer.

It is found in the cytoplasm. The protein resides in the nucleus. Its subcellular location is the secreted. In terms of biological role, could be involved in cell-cell and/or cell-matrix interactions necessary for normal growth control. Pro-apoptotic protein that functions intracellularly upstream of JNK activation and cytochrome c release. The protein is Galectin-7 (Lgals7) of Mus musculus (Mouse).